The primary structure comprises 158 residues: NAD(P)H-quinone oxidoreductase subunit J, chloroplastic (158 aa).

It belongs to the complex I 30 kDa subunit family. NDH is composed of at least 16 different subunits, 5 of which are encoded in the nucleus.

Its subcellular location is the plastid. It localises to the chloroplast thylakoid membrane. It carries out the reaction a plastoquinone + NADH + (n+1) H(+)(in) = a plastoquinol + NAD(+) + n H(+)(out). It catalyses the reaction a plastoquinone + NADPH + (n+1) H(+)(in) = a plastoquinol + NADP(+) + n H(+)(out). NDH shuttles electrons from NAD(P)H:plastoquinone, via FMN and iron-sulfur (Fe-S) centers, to quinones in the photosynthetic chain and possibly in a chloroplast respiratory chain. The immediate electron acceptor for the enzyme in this species is believed to be plastoquinone. Couples the redox reaction to proton translocation, and thus conserves the redox energy in a proton gradient. In Drimys granadensis, this protein is NAD(P)H-quinone oxidoreductase subunit J, chloroplastic.